Reading from the N-terminus, the 240-residue chain is DNA repair protein RecO (240 aa).

This sequence belongs to the RecO family.

Functionally, involved in DNA repair and RecF pathway recombination. This chain is DNA repair protein RecO, found in Wolbachia sp. subsp. Drosophila simulans (strain wRi).